Reading from the N-terminus, the 210-residue chain is Orotate phosphoribosyltransferase (210 aa).

5-phospho-alpha-D-ribose 1-diphosphate-binding positions include Arg94, Lys98, His100, and Glu120–Ser128. Ser124 contributes to the orotate binding site.

Belongs to the purine/pyrimidine phosphoribosyltransferase family. PyrE subfamily. As to quaternary structure, homodimer. Mg(2+) serves as cofactor.

It carries out the reaction orotidine 5'-phosphate + diphosphate = orotate + 5-phospho-alpha-D-ribose 1-diphosphate. It participates in pyrimidine metabolism; UMP biosynthesis via de novo pathway; UMP from orotate: step 1/2. Its function is as follows. Catalyzes the transfer of a ribosyl phosphate group from 5-phosphoribose 1-diphosphate to orotate, leading to the formation of orotidine monophosphate (OMP). This chain is Orotate phosphoribosyltransferase, found in Bacillus anthracis (strain A0248).